We begin with the raw amino-acid sequence, 130 residues long: Small ribosomal subunit protein uS11 (130 aa).

This sequence belongs to the universal ribosomal protein uS11 family. In terms of assembly, part of the 30S ribosomal subunit. Interacts with proteins S7 and S18. Binds to IF-3.

Functionally, located on the platform of the 30S subunit, it bridges several disparate RNA helices of the 16S rRNA. Forms part of the Shine-Dalgarno cleft in the 70S ribosome. This chain is Small ribosomal subunit protein uS11, found in Shewanella amazonensis (strain ATCC BAA-1098 / SB2B).